A 570-amino-acid polypeptide reads, in one-letter code: Proline--tRNA ligase (570 aa).

This sequence belongs to the class-II aminoacyl-tRNA synthetase family. ProS type 1 subfamily. In terms of assembly, homodimer.

It localises to the cytoplasm. The catalysed reaction is tRNA(Pro) + L-proline + ATP = L-prolyl-tRNA(Pro) + AMP + diphosphate. In terms of biological role, catalyzes the attachment of proline to tRNA(Pro) in a two-step reaction: proline is first activated by ATP to form Pro-AMP and then transferred to the acceptor end of tRNA(Pro). As ProRS can inadvertently accommodate and process non-cognate amino acids such as alanine and cysteine, to avoid such errors it has two additional distinct editing activities against alanine. One activity is designated as 'pretransfer' editing and involves the tRNA(Pro)-independent hydrolysis of activated Ala-AMP. The other activity is designated 'posttransfer' editing and involves deacylation of mischarged Ala-tRNA(Pro). The misacylated Cys-tRNA(Pro) is not edited by ProRS. This chain is Proline--tRNA ligase, found in Syntrophomonas wolfei subsp. wolfei (strain DSM 2245B / Goettingen).